The primary structure comprises 500 residues: Protein adenylyltransferase Fic (500 aa).

The helical transmembrane segment at 39–59 (LSFLIFFVIGSLFSGLMFALL) threads the bilayer. TPR repeat units lie at residues 122-155 (ALSS…SPRH) and 156-190 (PEIL…NPSH). The short motif at 247 to 252 (SVGIEG) is the Inhibitory (S/T)XXXE(G/N) motif element. Residues glutamate 251 and 333–336 (VGGH) contribute to the ATP site. The Fido domain occupies 302 to 437 (ITLKDLLEIH…IRPFVRFIAD (136 aa)). Histidine 380 is an active-site residue. Residues 384-391 (DGNGRTSR), 416-417 (YY), and asparagine 424 each bind ATP. The tract at residues 477–500 (GREGGSTVHEGSGTGDSIRIGTMW) is disordered.

Belongs to the fic family. Homodimer.

It localises to the membrane. The enzyme catalyses L-tyrosyl-[protein] + ATP = O-(5'-adenylyl)-L-tyrosyl-[protein] + diphosphate. It carries out the reaction L-threonyl-[protein] + ATP = 3-O-(5'-adenylyl)-L-threonyl-[protein] + diphosphate. It catalyses the reaction 3-O-(5'-adenylyl)-L-threonyl-[protein] + H2O = L-threonyl-[protein] + AMP + H(+). The side chain of Glu-251 determines which of the two opposing activities (AMPylase or de-AMPylase) will take place. In response to endoplasmic reticulum stress, mediates de-AMPylase activity. Adenylyltransferase activity is inhibited by the inhibitory helix present at the N-terminus: Glu-251 binds ATP and competes with ATP-binding at Arg-391, thereby preventing adenylyltransferase activity. In unstressed cells, disengagement of Glu-251 promotes adenylyltransferase activity. Activation dissociates ATP-binding from Glu-251, allowing ordered binding of the entire ATP moiety with the alpha-phosphate in an orientation that is productive for accepting an incoming target hydroxyl side chain. In terms of biological role, protein that can both mediate the addition of adenosine 5'-monophosphate (AMP) to specific residues of target proteins (AMPylation), and the removal of the same modification from target proteins (de-AMPylation), depending on the context. The side chain of Glu-251 determines which of the two opposing activities (AMPylase or de-AMPylase) will take place. Acts as a key regulator of the unfolded protein response (UPR) by mediating AMPylation or de-AMPylation of Hsc70-3/BiP. In unstressed cells, acts as an adenylyltransferase by mediating AMPylation of Hsc70-3/BiP at 'Thr-518', thereby inactivating it. In response to endoplasmic reticulum stress, acts as a phosphodiesterase by mediating removal of ATP (de-AMPylation) from Hsc70-3/BiP at 'Thr-518', leading to restore HSPA5/BiP activity. In Culex quinquefasciatus (Southern house mosquito), this protein is Protein adenylyltransferase Fic.